The primary structure comprises 365 residues: Endophilin-B1 (365 aa).

N-acetylmethionine is present on Met-1. Residues 1 to 30 (MNIMDFNVKKLAADAGTFLSRAVQFTEEKL) form a membrane-binding amphipathic helix region. The required for membrane binding stretch occupies residues 1-37 (MNIMDFNVKKLAADAGTFLSRAVQFTEEKLGQAEKTE). The 235-residue stretch at 27–261 (EEKLGQAEKT…LGSFPSNYVS (235 aa)) folds into the BAR domain. The residue at position 145 (Thr-145) is a Phosphothreonine; by CDK5. A coiled-coil region spans residues 156 to 185 (KTIAKERKLLQNKRLDLDAAKTRLKKAKAA). In terms of domain architecture, SH3 spans 305–365 (SSTRKARVLY…VPITYLELLN (61 aa)).

This sequence belongs to the endophilin family. As to quaternary structure, homodimer, and heterodimer with SH3GLB2. Binds BAX; induction of apoptosis augments BAX binding. Binds DNM1, HTT, AMPH, BIN1 and ARFGAP1. Interacts with UVRAG; UVRAG bridges the interaction to BECN1 indicative for an association with the PI3K complex II (PI3KC3-C2). Phosphorylated at Thr-145 by CDK5; this phosphorylation is required for autophagy induction in starved neurons and facilitates homodimerization. In terms of tissue distribution, expressed in brain, heart, lung and spleen. Low level in liver and testis.

It localises to the cytoplasm. Its subcellular location is the golgi apparatus membrane. The protein resides in the mitochondrion outer membrane. It is found in the cytoplasmic vesicle. The protein localises to the autophagosome membrane. It localises to the midbody. In terms of biological role, may be required for normal outer mitochondrial membrane dynamics. Required for coatomer-mediated retrograde transport in certain cells. May recruit other proteins to membranes with high curvature. May promote membrane fusion. Involved in activation of caspase-dependent apoptosis by promoting BAX/BAK1 activation. Involved in caspase-independent apoptosis during nutrition starvation and involved in the regulation of autophagy. Activates lipid kinase activity of PIK3C3 during autophagy probably by associating with the PI3K complex II (PI3KC3-C2). Associated with PI3KC3-C2 during autophagy may regulate the trafficking of ATG9A from the Golgi complex to the peripheral cytoplasm for the formation of autophagosomes by inducing Golgi membrane tubulation and fragmentation. Involved in regulation of degradative endocytic trafficking and cytokinesis, probably in the context of PI3KC3-C2. This Rattus norvegicus (Rat) protein is Endophilin-B1.